The chain runs to 210 residues: T-cell surface glycoprotein CD8 beta chain (210 aa).

The signal sequence occupies residues 1–21 (MRPRLWLLLAAQLAVLHGSSV). Positions 22–132 (LQQTPAYIKV…ELTFGKGTQL (111 aa)) constitute an Ig-like V-type domain. The Extracellular segment spans residues 22–170 (LQQTPAYIKV…ETQKGPLCSP (149 aa)). A disulfide bridge links cysteine 41 with cysteine 116. N-linked (GlcNAc...) asparagine glycosylation occurs at asparagine 102. The helical transmembrane segment at 171 to 191 (ITLGLLVAGVLVLLVSLGVAI) threads the bilayer. At 192–210 (HLCCRRRRARLRFMKQFYK) the chain is on the cytoplasmic side.

As to quaternary structure, forms disulfide-linked heterodimers with CD8A at the cell surface. Interacts with CD3D; this interaction couples TCR-CD3 with CD8. Interacts with LCK. In terms of processing, phosphorylated as a consequence of T-cell activation. Palmitoylated at the cytoplasmic tail and thereby targets the heterodimer CD8A/CD8B to lipid rafts unlike CD8A homodimers.

Its subcellular location is the cell membrane. Its function is as follows. Integral membrane glycoprotein that plays an essential role in the immune response and serves multiple functions in responses against both external and internal offenses. In T-cells, functions primarily as a coreceptor for MHC class I molecule:peptide complex. The antigens presented by class I peptides are derived from cytosolic proteins while class II derived from extracellular proteins. Interacts simultaneously with the T-cell receptor (TCR) and the MHC class I proteins presented by antigen presenting cells (APCs). In turn, recruits the Src kinase LCK to the vicinity of the TCR-CD3 complex. A palmitoylation site in the cytoplasmic tail of CD8B chain contributes to partitioning of CD8 into the plasma membrane lipid rafts where signaling proteins are enriched. Once LCK recruited, it initiates different intracellular signaling pathways by phosphorylating various substrates ultimately leading to lymphokine production, motility, adhesion and activation of cytotoxic T-lymphocytes (CTLs). Additionally, plays a critical role in thymic selection of CD8+ T-cells. This is T-cell surface glycoprotein CD8 beta chain (CD8B) from Pongo pygmaeus (Bornean orangutan).